The primary structure comprises 308 residues: Ribonuclease Z (308 aa).

Residues His61, His63, Asp65, His66, His139, Asp210, and His268 each contribute to the Zn(2+) site. Catalysis depends on Asp65, which acts as the Proton acceptor.

The protein belongs to the RNase Z family. In terms of assembly, homodimer. Requires Zn(2+) as cofactor.

It carries out the reaction Endonucleolytic cleavage of RNA, removing extra 3' nucleotides from tRNA precursor, generating 3' termini of tRNAs. A 3'-hydroxy group is left at the tRNA terminus and a 5'-phosphoryl group is left at the trailer molecule.. Its function is as follows. Zinc phosphodiesterase, which displays some tRNA 3'-processing endonuclease activity. Probably involved in tRNA maturation, by removing a 3'-trailer from precursor tRNA. This is Ribonuclease Z from Natronomonas pharaonis (strain ATCC 35678 / DSM 2160 / CIP 103997 / JCM 8858 / NBRC 14720 / NCIMB 2260 / Gabara) (Halobacterium pharaonis).